A 389-amino-acid chain; its full sequence is Monomeric sarcosine oxidase (389 aa).

8–38 contacts FAD; that stretch reads DVIVVGAGSMGMAAGYYLSKQGVKTLLVDSF. Cys318 is subject to S-8alpha-FAD cysteine.

Belongs to the MSOX/MTOX family. MSOX subfamily. Monomer. The cofactor is FAD.

The protein localises to the cytoplasm. The enzyme catalyses sarcosine + O2 + H2O = formaldehyde + glycine + H2O2. Functionally, catalyzes the oxidative demethylation of sarcosine. The sequence is that of Monomeric sarcosine oxidase (soxA) from Arthrobacter sp. (strain TE1826).